Reading from the N-terminus, the 306-residue chain is Protein YIPF1 (306 aa).

The Cytoplasmic portion of the chain corresponds to 1–119; sequence MAAVDDLQFE…VRLYIRSNPD (119 aa). A disordered region spans residues 30 to 63; it reads IEDPSVSFGHQPRPPGSVGREEDEELLGNNDSDE. Over residues 50–63 the composition is skewed to acidic residues; the sequence is EEDEELLGNNDSDE. The chain crosses the membrane as a helical span at residues 120 to 140; the sequence is LYGPFWICATLVFAIAISGNL. At 141 to 162 the chain is on the lumenal side; the sequence is SNFLIHLGEKTYHYVPEFQKVS. The helical transmembrane segment at 163 to 183 threads the bilayer; the sequence is IAATVIYAYAWLVPLALWGFL. The Cytoplasmic segment spans residues 184 to 200; that stretch reads LWRNSKVMSMVSYSFLE. Residues 201-221 traverse the membrane as a helical segment; the sequence is IVCVYGYSLFIYIPTAVLWII. Residues 222–227 are Lumenal-facing; it reads PQRVVR. A helical transmembrane segment spans residues 228–248; it reads WVLVMIALGVSGSVLVMTFWP. At 249–256 the chain is on the cytoplasmic side; the sequence is AVREDNRR. Residues 257–277 form a helical membrane-spanning segment; sequence VALATIVTIVLLHVLLSVGCL. The Lumenal segment spans residues 278–306; it reads AYFFDAPEMDHLPAAITTPNQTVTAAKSS. N297 carries an N-linked (GlcNAc...) asparagine glycan.

It belongs to the YIP1 family. In terms of assembly, interacts with YIPF6; this interaction may stabilize YIPF1. May also form a ternary complex with YIPF2 and YIPF6.

The protein resides in the golgi apparatus. It localises to the cis-Golgi network membrane. Its subcellular location is the trans-Golgi network membrane. The protein localises to the late endosome membrane. This chain is Protein YIPF1 (Yipf1), found in Mus musculus (Mouse).